Consider the following 785-residue polypeptide: Mitochondrial intermediate peptidase (785 aa).

The transit peptide at 1-27 directs the protein to the mitochondrion; the sequence is MLKAVMPRPWVCSRCVKRQIQSSRGLA. The tract at residues 26-52 is disordered; the sequence is LATASTQYREPRPVPTDHSAPGAKHDD. Zn(2+) is bound at residue His566. The active site involves Glu567. Residues His570 and His573 each coordinate Zn(2+).

This sequence belongs to the peptidase M3 family. Zn(2+) is required as a cofactor.

It localises to the mitochondrion matrix. It carries out the reaction Release of an N-terminal octapeptide as second stage of processing of some proteins imported into the mitochondrion.. In terms of biological role, cleaves proteins, imported into the mitochondrion, to their mature size. While most mitochondrial precursor proteins are processed to the mature form in one step by mitochondrial processing peptidase (MPP), the sequential cleavage by MIP of an octapeptide after initial processing by MPP is a required step for a subgroup of nuclear-encoded precursor proteins destined for the matrix or the inner membrane. The chain is Mitochondrial intermediate peptidase (oct1) from Sclerotinia sclerotiorum (strain ATCC 18683 / 1980 / Ss-1) (White mold).